The following is a 268-amino-acid chain: Hydroxyethylthiazole kinase (268 aa).

Residue Met-45 coordinates substrate. ATP-binding residues include Arg-121 and Thr-167. Gly-194 lines the substrate pocket.

This sequence belongs to the Thz kinase family. The cofactor is Mg(2+).

It catalyses the reaction 5-(2-hydroxyethyl)-4-methylthiazole + ATP = 4-methyl-5-(2-phosphooxyethyl)-thiazole + ADP + H(+). The protein operates within cofactor biosynthesis; thiamine diphosphate biosynthesis; 4-methyl-5-(2-phosphoethyl)-thiazole from 5-(2-hydroxyethyl)-4-methylthiazole: step 1/1. Its function is as follows. Catalyzes the phosphorylation of the hydroxyl group of 4-methyl-5-beta-hydroxyethylthiazole (THZ). This is Hydroxyethylthiazole kinase from Bacillus thuringiensis (strain Al Hakam).